The primary structure comprises 458 residues: Argininosuccinate lyase (458 aa).

Belongs to the lyase 1 family. Argininosuccinate lyase subfamily.

The protein resides in the cytoplasm. The enzyme catalyses 2-(N(omega)-L-arginino)succinate = fumarate + L-arginine. The protein operates within amino-acid biosynthesis; L-arginine biosynthesis; L-arginine from L-ornithine and carbamoyl phosphate: step 3/3. The protein is Argininosuccinate lyase of Salmonella paratyphi A (strain ATCC 9150 / SARB42).